A 297-amino-acid polypeptide reads, in one-letter code: Ribosomal RNA small subunit methyltransferase A (297 aa).

Asparagine 31, leucine 33, glycine 58, glutamate 79, aspartate 104, and asparagine 129 together coordinate S-adenosyl-L-methionine.

The protein belongs to the class I-like SAM-binding methyltransferase superfamily. rRNA adenine N(6)-methyltransferase family. RsmA subfamily.

The protein localises to the cytoplasm. The catalysed reaction is adenosine(1518)/adenosine(1519) in 16S rRNA + 4 S-adenosyl-L-methionine = N(6)-dimethyladenosine(1518)/N(6)-dimethyladenosine(1519) in 16S rRNA + 4 S-adenosyl-L-homocysteine + 4 H(+). Specifically dimethylates two adjacent adenosines (A1518 and A1519) in the loop of a conserved hairpin near the 3'-end of 16S rRNA in the 30S particle. May play a critical role in biogenesis of 30S subunits. This Staphylococcus aureus (strain bovine RF122 / ET3-1) protein is Ribosomal RNA small subunit methyltransferase A.